The primary structure comprises 689 residues: Protein asunder (689 aa).

Positions 521–550 (NGARLKLSKAKDQYRLLYRELEQLIQLNAT) form a coiled coil. 2 disordered regions span residues 591–619 (SPERLEPISSVGASGSSNSNSLLKASKRR) and 669–689 (KDAVTTGASITPNVKEESVRS). Residues 599 to 614 (SSVGASGSSNSNSLLK) show a composition bias toward low complexity. Residues 613 to 619 (LKASKRR) carry the Nuclear localization signal (NLS) motif.

Belongs to the Integrator subunit 13 family. In terms of assembly, belongs to the multiprotein complex Integrator, at least composed of IntS1, IntS2, IntS3, IntS4, omd/IntS5, IntS6, defl/IntS7, IntS8, IntS9, IntS10, IntS11, IntS12, asun/IntS13, IntS14 and IntS15. The core complex associates with protein phosphatase 2A subunits mts/PP2A and Pp2A-29B, to form the Integrator-PP2A (INTAC) complex. In terms of processing, phosphorylated.

Its subcellular location is the nucleus. The protein localises to the cytoplasm. It localises to the perinuclear region. Functionally, component of the integrator complex, a multiprotein complex that terminates RNA polymerase II (Pol II) transcription in the promoter-proximal region of genes. The integrator complex provides a quality checkpoint during transcription elongation by driving premature transcription termination of transcripts that are unfavorably configured for transcriptional elongation: the complex terminates transcription by (1) catalyzing dephosphorylation of the C-terminal domain (CTD) of Pol II subunit Polr2A/Rbp1 and Spt5, and (2) degrading the exiting nascent RNA transcript via endonuclease activity. The integrator complex is also involved in the 3'-end processing of the U7 snRNA, and also the spliceosomal snRNAs U1, U2, U4 and U5. The polypeptide is Protein asunder (asun) (Drosophila simulans (Fruit fly)).